The chain runs to 416 residues: Queuine tRNA-ribosyltransferase accessory subunit 2 (416 aa).

Cys323, Cys325, Cys328, and His354 together coordinate Zn(2+).

This sequence belongs to the queuine tRNA-ribosyltransferase family. QTRT2 subfamily. Heterodimer of a catalytic subunit and an accessory subunit. Zn(2+) is required as a cofactor.

It localises to the cytoplasm. Functionally, non-catalytic subunit of the queuine tRNA-ribosyltransferase (TGT) that catalyzes the base-exchange of a guanine (G) residue with queuine (Q) at position 34 (anticodon wobble position) in tRNAs with GU(N) anticodons (tRNA-Asp, -Asn, -His and -Tyr), resulting in the hypermodified nucleoside queuosine (7-(((4,5-cis-dihydroxy-2-cyclopenten-1-yl)amino)methyl)-7-deazaguanosine). The sequence is that of Queuine tRNA-ribosyltransferase accessory subunit 2 from Drosophila mojavensis (Fruit fly).